We begin with the raw amino-acid sequence, 551 residues long: Probable NADH-ubiquinone oxidoreductase C3A11.07, mitochondrial (551 aa).

Residues 1-37 constitute a mitochondrion transit peptide; that stretch reads MLFSRSILRGMPKAGIPKSPLALSASRNLRLANSVRF. Position 93 to 123 (93 to 123) interacts with FAD; it reads TLVVLGAGWGATSILRTIDTSLFNVIVVSPR. 255–291 is a binding site for NAD(+); it reads VHTVVVGGGPTGMEFAGEMADFIEDDLKSWYPELADD.

This sequence belongs to the NADH dehydrogenase family.

It localises to the mitochondrion. It catalyses the reaction a quinone + NADH + H(+) = a quinol + NAD(+). The enzyme catalyses a ubiquinone + NADH + H(+) = a ubiquinol + NAD(+). Catalyzes the oxidation of NADH. The protein is Probable NADH-ubiquinone oxidoreductase C3A11.07, mitochondrial of Schizosaccharomyces pombe (strain 972 / ATCC 24843) (Fission yeast).